Reading from the N-terminus, the 380-residue chain is Erythronate-4-phosphate dehydrogenase (380 aa).

Substrate is bound by residues Ser-45 and Thr-66. Residues Asp-146, Thr-174, 205–207 (ASR), and Asp-231 contribute to the NAD(+) site. The active site involves Arg-207. Glu-236 is a catalytic residue. The active-site Proton donor is His-253. Gly-256 is an NAD(+) binding site. Tyr-257 is a binding site for substrate.

Belongs to the D-isomer specific 2-hydroxyacid dehydrogenase family. PdxB subfamily. Homodimer.

Its subcellular location is the cytoplasm. It carries out the reaction 4-phospho-D-erythronate + NAD(+) = (R)-3-hydroxy-2-oxo-4-phosphooxybutanoate + NADH + H(+). Its pathway is cofactor biosynthesis; pyridoxine 5'-phosphate biosynthesis; pyridoxine 5'-phosphate from D-erythrose 4-phosphate: step 2/5. Catalyzes the oxidation of erythronate-4-phosphate to 3-hydroxy-2-oxo-4-phosphonooxybutanoate. This Pseudomonas fluorescens (strain SBW25) protein is Erythronate-4-phosphate dehydrogenase.